Consider the following 242-residue polypeptide: N-alpha-acetyltransferase 60 (242 aa).

Over 1 to 192 the chain is Cytoplasmic; sequence MTEVVPSSAL…GGHPPWTILD (192 aa). One can recognise an N-acetyltransferase domain in the interval 13–182; it reads VSLRLLCHDD…DGFTYVLYIN (170 aa). Tyrosine 38 provides a ligand contact to substrate. Lysine 79 bears the N6-acetyllysine; by autocatalysis mark. Tyrosine 97 is an active-site residue. Leucine 99 lines the substrate pocket. 101–103 is an acetyl-CoA binding site; the sequence is LGV. An N6-acetyllysine; by autocatalysis mark is found at lysine 105, lysine 109, and lysine 121. 109 to 114 serves as a coordination point for acetyl-CoA; the sequence is KHGIGS. The active site involves histidine 138. Acetyl-CoA-binding positions include asparagine 143 and 150-153; that span reads YENR. N6-acetyllysine; by autocatalysis is present on lysine 156. The tract at residues 162–173 is required for homodimerization; that stretch reads PYYYSIRGVLKD. A substrate-binding site is contributed by tyrosine 165. Residues 193–236 constitute an intramembrane region (helical); the sequence is YIQHLGSALASLSPCSIPHRVYRQAHSLLCSFLPWSGISSKSGI. Topologically, residues 237 to 242 are cytoplasmic; the sequence is EYSRTM.

This sequence belongs to the acetyltransferase family. NAA60 subfamily. As to quaternary structure, monomer and homodimer; monomer in presence of substrate and homodimer in its absence. Post-translationally, acetylated: autoacetylation is required for optimal acetyltransferase activity.

It localises to the golgi apparatus membrane. It catalyses the reaction N-terminal L-methionyl-[transmembrane protein] + acetyl-CoA = N-terminal N(alpha)-acetyl-L-methionyl-[transmembrane protein] + CoA + H(+). The enzyme catalyses L-lysyl-[protein] + acetyl-CoA = N(6)-acetyl-L-lysyl-[protein] + CoA + H(+). Functionally, N-alpha-acetyltransferase that specifically mediates the acetylation of N-terminal residues of the transmembrane proteins, with a strong preference for N-termini facing the cytosol. Displays N-terminal acetyltransferase activity towards a range of N-terminal sequences including those starting with Met-Lys, Met-Val, Met-Ala and Met-Met. Required for normal chromosomal segregation during anaphase. May also show histone acetyltransferase activity; such results are however unclear in vivo and would require additional experimental evidences. This is N-alpha-acetyltransferase 60 from Homo sapiens (Human).